Reading from the N-terminus, the 430-residue chain is Ribosomal protein uS12 methylthiotransferase RimO (430 aa).

Residues 2-119 enclose the MTTase N-terminal domain; it reads ISVYSISLGC…WPAMLAHALK (118 aa). 6 residues coordinate [4Fe-4S] cluster: Cys-11, Cys-46, Cys-81, Cys-145, Cys-149, and Cys-152. Residues 131–361 form the Radical SAM core domain; it reads STGPSYAWLK…MEVQAEISEE (231 aa). Residues 364–430 form the TRAM domain; that stretch reads AVHEGTRQQV…TRTYDLVALV (67 aa).

The protein belongs to the methylthiotransferase family. RimO subfamily. Requires [4Fe-4S] cluster as cofactor.

The protein localises to the cytoplasm. The catalysed reaction is L-aspartate(89)-[ribosomal protein uS12]-hydrogen + (sulfur carrier)-SH + AH2 + 2 S-adenosyl-L-methionine = 3-methylsulfanyl-L-aspartate(89)-[ribosomal protein uS12]-hydrogen + (sulfur carrier)-H + 5'-deoxyadenosine + L-methionine + A + S-adenosyl-L-homocysteine + 2 H(+). Catalyzes the methylthiolation of an aspartic acid residue of ribosomal protein uS12. The sequence is that of Ribosomal protein uS12 methylthiotransferase RimO from Nitratidesulfovibrio vulgaris (strain DP4) (Desulfovibrio vulgaris).